We begin with the raw amino-acid sequence, 455 residues long: Chromosomal replication initiator protein DnaA (455 aa).

The tract at residues 1–75 (MDTNNNIEKE…EILSQNKVGM (75 aa)) is domain I, interacts with DnaA modulators. Residues 75–106 (MHLAHSVDVRIEVAPKIQINAQANINYKAIKT) form a domain II region. The domain III, AAA+ region stretch occupies residues 107–321 (SVKDSYTFEN…GAIIKISVNA (215 aa)). Glycine 151, glycine 153, lysine 154, and threonine 155 together coordinate ATP. Positions 322–455 (NLMNAPIDLN…DKKTAFNSSE (134 aa)) are domain IV, binds dsDNA.

Belongs to the DnaA family. Oligomerizes as a right-handed, spiral filament on DNA at oriC.

Its subcellular location is the cytoplasm. Its function is as follows. Plays an essential role in the initiation and regulation of chromosomal replication. ATP-DnaA binds to the origin of replication (oriC) to initiate formation of the DNA replication initiation complex once per cell cycle. Binds the DnaA box (a 9 base pair repeat at the origin) and separates the double-stranded (ds)DNA. Forms a right-handed helical filament on oriC DNA; dsDNA binds to the exterior of the filament while single-stranded (ss)DNA is stabiized in the filament's interior. The ATP-DnaA-oriC complex binds and stabilizes one strand of the AT-rich DNA unwinding element (DUE), permitting loading of DNA polymerase. After initiation quickly degrades to an ADP-DnaA complex that is not apt for DNA replication. Binds acidic phospholipids. The chain is Chromosomal replication initiator protein DnaA from Helicobacter pylori (strain G27).